Consider the following 389-residue polypeptide: Large envelope protein (389 aa).

At Met-1 the chain carries N-acetylmethionine. Gly-2 carries N-myristoyl glycine; by host lipidation. The interval 2–108 (GQNLSTSNPL…PPLRDTHPQA (107 aa)) is pre-S1. The segment at 2–163 (GQNLSTSNPL…FSRTGDPAPN (162 aa)) is pre-S. The Virion surface; in external conformation portion of the chain corresponds to 2-170 (GQNLSTSNPL…APNMESITSG (169 aa)). Over 2 to 242 (GQNLSTSNPL…PGYRWMCLRR (241 aa)) the chain is Intravirion; in internal conformation. A disordered region spans residues 73–99 (IITTVPANPPPASTNRQSGRKPTPISP). The pre-S2 stretch occupies residues 109–163 (MHWNSTTFHQALQDPRVRGLYFPAGGSSSGTAYPVPDTASHISSIFSRTGDPAPN). A helical membrane pass occupies residues 171-191 (FLGPLLVLQAGFFLLTKILTI). The Intravirion; in external conformation portion of the chain corresponds to 192-242 (PQSLDSWWTSLNFLGGAPVCLGQNSQSPTSNHSPTSCPPICPGYRWMCLRR). The chain crosses the membrane as a helical span at residues 243-263 (FIIFLFILLLCLIFLLVLLDY). Residues 264–337 (QGMLPVCPLI…WASVRFSWLS (74 aa)) lie on the Virion surface side of the membrane. N-linked (GlcNAc...) asparagine; by host glycosylation occurs at Asn-309. A helical membrane pass occupies residues 338-358 (LLAPFVQWFAGLSPTVWLSVI). The Intravirion segment spans residues 359 to 364 (WMMWYW). The helical transmembrane segment at 365 to 387 (GPNLYNILSPFIPLLPIFFCLWV) threads the bilayer. Over 388 to 389 (YI) the chain is Virion surface.

The protein belongs to the orthohepadnavirus major surface antigen family. In its internal form (Li-HBsAg), interacts with the capsid protein and with the isoform S. Interacts with host chaperone CANX. In terms of assembly, associates with host chaperone CANX through its pre-S2 N glycan; this association may be essential for isoform M proper secretion. As to quaternary structure, interacts with isoform L. Interacts with the antigens of satellite virus HDV (HDVAgs); this interaction is required for encapsidation of HDV genomic RNA. Post-translationally, isoform M is N-terminally acetylated by host at a ratio of 90%, and N-glycosylated by host at the pre-S2 region. Myristoylated.

It localises to the virion membrane. Functionally, the large envelope protein exists in two topological conformations, one which is termed 'external' or Le-HBsAg and the other 'internal' or Li-HBsAg. In its external conformation the protein attaches the virus to cell receptors and thereby initiating infection. This interaction determines the species specificity and liver tropism. This attachment induces virion internalization predominantly through caveolin-mediated endocytosis. The large envelope protein also assures fusion between virion membrane and endosomal membrane. In its internal conformation the protein plays a role in virion morphogenesis and mediates the contact with the nucleocapsid like a matrix protein. Its function is as follows. The middle envelope protein plays an important role in the budding of the virion. It is involved in the induction of budding in a nucleocapsid independent way. In this process the majority of envelope proteins bud to form subviral lipoprotein particles of 22 nm of diameter that do not contain a nucleocapsid. The chain is Large envelope protein from Gorilla gorilla (western gorilla).